Consider the following 50-residue polypeptide: Protein hunchback (50 aa).

3 consecutive C2H2-type zinc fingers follow at residues histidine 1 to histidine 5, phenylalanine 11 to histidine 33, and tyrosine 39 to tyrosine 50.

Belongs to the hunchback C2H2-type zinc-finger protein family.

The protein resides in the nucleus. Functionally, gap class segmentation protein that controls development of head structures. The protein is Protein hunchback (hb) of Platynereis dumerilii (Dumeril's clam worm).